Here is a 501-residue protein sequence, read N- to C-terminus: 2,3-bisphosphoglycerate-independent phosphoglycerate mutase (501 aa).

Aspartate 10 and serine 60 together coordinate Mn(2+). Serine 60 serves as the catalytic Phosphoserine intermediate. Substrate is bound by residues histidine 121, 151-152 (RD), arginine 182, arginine 188, 256-259 (RPDR), and lysine 329. 5 residues coordinate Mn(2+): aspartate 394, histidine 398, aspartate 435, histidine 436, and histidine 453.

Belongs to the BPG-independent phosphoglycerate mutase family. In terms of assembly, monomer. It depends on Mn(2+) as a cofactor.

It carries out the reaction (2R)-2-phosphoglycerate = (2R)-3-phosphoglycerate. The protein operates within carbohydrate degradation; glycolysis; pyruvate from D-glyceraldehyde 3-phosphate: step 3/5. Its function is as follows. Catalyzes the interconversion of 2-phosphoglycerate and 3-phosphoglycerate. This chain is 2,3-bisphosphoglycerate-independent phosphoglycerate mutase, found in Mycoplasmopsis synoviae (strain 53) (Mycoplasma synoviae).